A 364-amino-acid chain; its full sequence is Aminomethyltransferase (364 aa).

Belongs to the GcvT family. The glycine cleavage system is composed of four proteins: P, T, L and H.

The catalysed reaction is N(6)-[(R)-S(8)-aminomethyldihydrolipoyl]-L-lysyl-[protein] + (6S)-5,6,7,8-tetrahydrofolate = N(6)-[(R)-dihydrolipoyl]-L-lysyl-[protein] + (6R)-5,10-methylene-5,6,7,8-tetrahydrofolate + NH4(+). Functionally, the glycine cleavage system catalyzes the degradation of glycine. This is Aminomethyltransferase from Salmonella paratyphi B (strain ATCC BAA-1250 / SPB7).